Consider the following 1423-residue polypeptide: MATQVLIAHTGQRLEVDTAQFSHLDDFKAWVGRNTPVAPKHFVALTPQGRTVKHASLYAEACCPSQKEIYIYDIRMSQAPSSDGSPSVVSQVPPPKRYSIPNAPNSIENVQAIASWQELYKQRRAWAVHLLEDCSAMDATARARFEEMDVMIKCVDAAVANLELSIKQIEPKYTELKKWVEPALEEHARLSTSWQQYLALARNTPVSPSMVKFMTRGQASKSNATLEDLIEPDTAKKAGTLAPTAHRRFNDKATELDRAAKKMYQTLDALIADFDKLMSRSVLGRSDESTQLLQDIEAVVKQIDSDYRTALSYSGSQKDVAQASKTASNHTERLVPNLKKRAKEMDDLLQYVTTSRNTVASDAVEFMRAITEITSLRGKLKDNIGILNQSEDDMTTFDYLRLIQQLPYMYASFLVEAIRRQEWNEKIKADSSTLANEMALFQDEEAKRRRRWQKMVGSTYGPGLDTNVIGLEVSVLGDDNSWPSVNKDELVAFLAALKDQETEEAILEDVGRLIQELNSPTKQQSKRLKAFKNGSVHEAALGRSGLMIRGDDELLRSLQDDKSKLESKLKTAESRVRRLEDLLHRQSQASRPGNLFQPQTNSIHERNDSASSVKAAPTDRQRASSEGTDTLLRRISELENELREEKQRSSRIQNDLSNRATQHDDMKNQIREVNSTKKDLLENMEALKREFVLERKSLEDEIKTLKARLEDTEDEMEHFGESREKERTSYEERAQQLEAELERIDKERRDEMLKAQGQVDFLRNENRIQREQRDTLERELQNTKDAGHATSKRLEALQEAADAHLQSLKELHSQLTGNDPVPDDGDLADVIQTKAADLLARLQNMESDTSLIRGDLDRTRDQVKELREELASTKDKLATEEAASIHVRECVSEEKAKVKALEHELAETREQLSRARARLADGETGSETLQKRVEEEEKKVASLSEELASRQSQVGSLEEELHLYKEKQEAACARASELTQRHETRDERSKELTQRLYSQNDRLCHLLERLGYAVSRKEGTMTITKVPRAERAAQNPNDSSDPGTSLRKSGMLGAKALHESADLDLLYWWNSADAATETEKYAAFMSKLGDFDADLFADTIYHRIKEVEHKARKWQKEARSYRDRAHIAQKDAHDKIAFRHFKEGDLALFLPTRNQQAGAWAAFNVGFPHYFLREQDSHRLRHREWLVARINRIQERVVDLSKSLQANDSASINDEENDNPFQLSDGLRWYLIDAQEDKPGAPATPGMGKSTVAANNVEATANIHTHMAGAKGKNRDSVHSIEGINKTLSKSLESRRSSSSSKRALPFAGAGAQALLKSNPIASETNSLRAAAPETPVATSPVQGGLLSTGEGGRPQPGAAGSSSARRPNDGPGEASGNGDAAKTAEPRRMLDRQESTGSPTKKSVVWDPLWSVDYTYESPGKK.

Coiled coils occupy residues 551–589 and 625–978; these read DDELLRSLQDDKSKLESKLKTAESRVRRLEDLLHRQSQA and SEGT…ASEL. Disordered stretches follow at residues 583-660 and 1028-1048; these read LHRQ…SNRA and RAERAAQNPNDSSDPGTSLRK. Residues 585-602 show a composition bias toward polar residues; it reads RQSQASRPGNLFQPQTNS. Residues 631–648 show a composition bias toward basic and acidic residues; it reads LLRRISELENELREEKQR. Composition is skewed to polar residues over residues 650–660 and 1034–1047; these read SRIQNDLSNRA and QNPNDSSDPGTSLR. Positions 1102–1130 form a coiled coil; sequence HRIKEVEHKARKWQKEARSYRDRAHIAQK. Residues 1327–1423 are disordered; that stretch reads SLRAAAPETP…DYTYESPGKK (97 aa). Over residues 1383–1395 the composition is skewed to basic and acidic residues; sequence KTAEPRRMLDRQE.

Belongs to the ATG11 family. Homodimer and potential homooligomers. Interacts with ATG1 kinase and the ATG19 and ATG34 cargo protein transporters. Interacts with ATG9, ATG17 and ATG20.

It is found in the preautophagosomal structure membrane. It localises to the vacuole membrane. In terms of biological role, involved in cytoplasm to vacuole transport (Cvt), pexophagy, mitophagy and nucleophagy. Recruits mitochondria for their selective degradation via autophagy (mitophagy) during starvation, through its interaction with ATG32. Works as scaffold proteins that recruit ATG proteins to the pre-autophagosome (PAS), the site of vesicle/autophagosome formation. Required for ATG9 anterograde transport from the mitochondria to the PAS. Also recruits the ATG19-prAPE1 complex to the PAS. Required for the Cvt vesicles completion. Plays a role in morphological differentiation and cephalosporin production. The polypeptide is Autophagy-related protein 11 (Hapsidospora chrysogena (Acremonium chrysogenum)).